The chain runs to 153 residues: Transcriptional repressor NrdR (153 aa).

A zinc finger lies at 3–34; sequence CPFCGYEDSKVVDTRPTNEGKTIKRRRECLKC. The ATP-cone domain occupies 49–139; that stretch reads ILVIKKDNRR…VYRQFKDINT (91 aa).

The protein belongs to the NrdR family. The cofactor is Zn(2+).

In terms of biological role, negatively regulates transcription of bacterial ribonucleotide reductase nrd genes and operons by binding to NrdR-boxes. The protein is Transcriptional repressor NrdR of Caldicellulosiruptor bescii (strain ATCC BAA-1888 / DSM 6725 / KCTC 15123 / Z-1320) (Anaerocellum thermophilum).